A 270-amino-acid chain; its full sequence is MHYYRYSNAKVSCWYKYLLFSYNIIFWLAGVVFLGVGLWAWSEKGVLSDLTKVTRMHGIDPVVLVLMVGVVMFTLGFAGCVGALRENICLLNFFCGTIVLIFFLELAVAVLAFLFQDWVRDRFREFFESNIKSYRDDIDLQNLIDSLQKANQCCGAYGPEDWDLNVYFNCSGASYSREKCGVPFSCCVPDPAQKVVNTQCGYDVRIQLKSKWDESIFTKGCIQALESWLPRNIYIVAGVFIAISLLQIFGIFLARTLISDIEAVKAGHHF.

The Cytoplasmic portion of the chain corresponds to 1–17 (MHYYRYSNAKVSCWYKY). Residues 18-38 (LLFSYNIIFWLAGVVFLGVGL) form a helical membrane-spanning segment. At 39–61 (WAWSEKGVLSDLTKVTRMHGIDP) the chain is on the extracellular side. A helical transmembrane segment spans residues 62–82 (VVLVLMVGVVMFTLGFAGCVG). The Cytoplasmic portion of the chain corresponds to 83-92 (ALRENICLLN). The chain crosses the membrane as a helical span at residues 93–113 (FFCGTIVLIFFLELAVAVLAF). Residues 114–232 (LFQDWVRDRF…QALESWLPRN (119 aa)) lie on the Extracellular side of the membrane. Residues 114–232 (LFQDWVRDRF…QALESWLPRN (119 aa)) are necessary and sufficient for interaction with ADAM10. 4 disulfides stabilise this stretch: Cys-153–Cys-221, Cys-154–Cys-186, Cys-170–Cys-180, and Cys-187–Cys-200. Asn-169 is a glycosylation site (N-linked (GlcNAc...) asparagine). A helical transmembrane segment spans residues 233-253 (IYIVAGVFIAISLLQIFGIFL). The Cytoplasmic segment spans residues 254-270 (ARTLISDIEAVKAGHHF).

It belongs to the tetraspanin (TM4SF) family. Interacts with ADAM10; the interaction promotes ADAM10 maturation and cell surface expression.

It is found in the cell membrane. Its function is as follows. Part of TspanC8 subgroup, composed of 6 members that interact with the transmembrane metalloprotease ADAM10. This interaction is required for ADAM10 exit from the endoplasmic reticulum and for enzymatic maturation and trafficking to the cell surface as well as substrate specificity. Different TspanC8/ADAM10 complexes have distinct substrates. Negatively regulates ADAM10-mediated cleavage of GP6. Promotes ADAM10-mediated cleavage of CDH5. This chain is Tetraspanin-14, found in Homo sapiens (Human).